Consider the following 1149-residue polypeptide: Transforming acidic coiled-coil-containing protein 2 (1149 aa).

Disordered stretches follow at residues 1 to 73, 91 to 227, and 247 to 430; these read MGNE…GSNQ, SASP…ASSG, and PCSA…VPLT. Over residues 13 to 35 the composition is skewed to polar residues; sequence TSSVQSPRSLQPPGKSQSLQKQQ. Over residues 91-106 the composition is skewed to low complexity; sequence SASPSAARASPAPLAP. Ser-100 bears the Phosphoserine mark. Pro residues predominate over residues 155-180; that stretch reads KAPPAPPPPPPEVTPEPEVIDPPAPE. Ser-265 carries the post-translational modification Phosphoserine. 2 stretches are compositionally biased toward polar residues: residues 267–284 and 300–317; these read ESVPPSKSTLSRSLSLQA and TLTTDACGTGSNSASSTL. Positions 318–334 are enriched in basic residues; the sequence is KRTKKTRPPSLKKKQAT. Residue Ser-354 is modified to Phosphoserine. Positions 358–368 are enriched in basic and acidic residues; sequence SEEHLAPETKT. Phosphoserine is present on Ser-419. The residue at position 439 (Thr-439) is a Phosphothreonine. Positions 463–617 are disordered; sequence SEDKGSWESQ…PAKKKKTPLK (155 aa). Residues 481–498 are compositionally biased toward basic residues; sequence KIGKKPVAKMPLRRPKMK. Residues 508–596 enclose the SPAZ domain; it reads PASPPRSPTE…SPASFEIPAS (89 aa). Phosphoserine is present on residues Ser-510 and Ser-514. Thr-516 is modified (phosphothreonine). Polar residues predominate over residues 541–561; the sequence is NPFSSTSKMQESPKLSQQSYN. A phosphoserine mark is found at Ser-552, Ser-582, Ser-585, Ser-587, and Ser-596. A compositionally biased stretch (low complexity) spans 575–590; it reads KASSKTPSSPSKSPAS. Thr-632, Thr-653, and Thr-657 each carry phosphothreonine. Disordered regions lie at residues 636–665 and 696–719; these read KKSPKRSPLSDPPSQDPTPAATPEAPSAIS and DFPQPSDLSNFVNETKFNSPSEEL. Residues 652–665 are compositionally biased toward low complexity; sequence PTPAATPEAPSAIS. Over residues 701–716 the composition is skewed to polar residues; sequence SDLSNFVNETKFNSPS. Phosphoserine occurs at positions 714 and 736. The residue at position 755 (Thr-755) is a Phosphothreonine. The interval 756 to 780 is disordered; it reads PQESPVKSPPVRMSDSPTPCSGSSF. Ser-759 and Ser-771 each carry phosphoserine. Residues 770-780 show a composition bias toward polar residues; sequence DSPTPCSGSSF. Coiled-coil stretches lie at residues 877-905 and 948-1148; these read AQKLQEELEFAVMRIEALKLARQIALASR and DLDS…KMGK.

This sequence belongs to the TACC family. As to quaternary structure, interacts with microtubules. Interacts with YEATS4, GCN5L2 and PCAF. Interacts with CCDC100/CEP120. Post-translationally, phosphorylated; which is required for localization in centrosome. Expressed in brain, kidney, lung, thymus and ovary. Not detectable in normal tissues at protein level.

The protein localises to the cytoplasm. Its subcellular location is the nucleus. It is found in the cytoskeleton. The protein resides in the microtubule organizing center. It localises to the centrosome. Its function is as follows. Plays a role in the microtubule-dependent coupling of the nucleus and the centrosome. Involved in the processes that regulate centrosome-mediated interkinetic nuclear migration (INM) of neural progenitors. May play a role in organizing centrosomal microtubules. The protein is Transforming acidic coiled-coil-containing protein 2 (Tacc2) of Mus musculus (Mouse).